A 56-amino-acid chain; its full sequence is Large ribosomal subunit protein bL32 (56 aa).

Residues 1 to 23 are disordered; that stretch reads MAVQQNKSTRSKRGMRRSHNALP. A compositionally biased stretch (basic residues) spans 9–19; sequence TRSKRGMRRSH.

It belongs to the bacterial ribosomal protein bL32 family.

In Blochmanniella floridana, this protein is Large ribosomal subunit protein bL32.